The primary structure comprises 190 residues: Peptidyl-prolyl cis-trans isomerase A (190 aa).

The N-terminal stretch at methionine 1–alanine 23 is a signal peptide. The PPIase cyclophilin-type domain maps to threonine 26–isoleucine 187.

It belongs to the cyclophilin-type PPIase family.

It is found in the periplasm. The catalysed reaction is [protein]-peptidylproline (omega=180) = [protein]-peptidylproline (omega=0). Functionally, PPIases accelerate the folding of proteins. It catalyzes the cis-trans isomerization of proline imidic peptide bonds in oligopeptides. The protein is Peptidyl-prolyl cis-trans isomerase A (rotA) of Dickeya dadantii (strain 3937) (Erwinia chrysanthemi (strain 3937)).